Consider the following 379-residue polypeptide: Putative beta-glucosidase 6 (379 aa).

An N-terminal signal peptide occupies residues 1–20; the sequence is MEKTFALITIFLAFAFSGKC. A beta-D-glucoside contacts are provided by residues glutamine 43, histidine 141, and 186 to 187; that span reads NE. Residue glutamate 187 is the Proton donor of the active site. The cysteines at positions 206 and 213 are disulfide-linked. Residue asparagine 217 is glycosylated (N-linked (GlcNAc...) asparagine). Tyrosine 329 provides a ligand contact to a beta-D-glucoside. A glycan (N-linked (GlcNAc...) asparagine) is linked at asparagine 362.

This sequence belongs to the glycosyl hydrolase 1 family.

The enzyme catalyses Hydrolysis of terminal, non-reducing beta-D-glucosyl residues with release of beta-D-glucose.. The protein is Putative beta-glucosidase 6 of Arabidopsis thaliana (Mouse-ear cress).